The primary structure comprises 109 residues: Homeobox protein E60 (109 aa).

Residues 1-31 (PRTRRVKRSDGRGNGGTPEEKRPRTAFSGEQ) are disordered. A DNA-binding region (homeobox) is located at residues 20 to 79 (EKRPRTAFSGEQLARLKREFAENRYLTERRRQQLSRDLGLNEAQIKIWFQNKRAKIKKAS).

Belongs to the engrailed homeobox family.

It is found in the nucleus. In Apis mellifera (Honeybee), this protein is Homeobox protein E60.